The following is a 152-amino-acid chain: Small ribosomal subunit protein uS15 (152 aa).

The segment covering 1 to 11 has biased composition (basic residues); that stretch reads MARMHARRRGK. The interval 1-25 is disordered; that stretch reads MARMHARRRGKSSSVRPARNEAPAW.

Belongs to the universal ribosomal protein uS15 family. Part of the 30S ribosomal subunit.

The polypeptide is Small ribosomal subunit protein uS15 (Methanoregula boonei (strain DSM 21154 / JCM 14090 / 6A8)).